The following is a 282-amino-acid chain: Undecaprenyl-diphosphatase (282 aa).

A run of 8 helical transmembrane segments spans residues 1 to 21 (MNLFQAIILGIIQGLTEFLPI), 40 to 60 (GAAFTAIIQIGTLAAVLIYFA), 89 to 109 (WMIAVGTIPIVVFGLTFKHEI), 112 to 132 (VLRSLYIVSASMIGLALVLVV), 153 to 173 (LSWTDAIIIGLAQAMALIPGS), 196 to 216 (FSFLLSLPSVFAAGMLELYQT), 228 to 248 (LNLAVATIAAFIFGYLSIAFL), and 258 to 278 (GIFIAYRLILGIGLIVMIGTG).

It belongs to the UppP family.

It localises to the cell inner membrane. The catalysed reaction is di-trans,octa-cis-undecaprenyl diphosphate + H2O = di-trans,octa-cis-undecaprenyl phosphate + phosphate + H(+). Its function is as follows. Catalyzes the dephosphorylation of undecaprenyl diphosphate (UPP). Confers resistance to bacitracin. This chain is Undecaprenyl-diphosphatase, found in Chlorobaculum tepidum (strain ATCC 49652 / DSM 12025 / NBRC 103806 / TLS) (Chlorobium tepidum).